The chain runs to 307 residues: Hepatitis A virus cellular receptor 1 homolog (307 aa).

An N-terminal signal peptide occupies residues 1–21 (MVQLQVFISGLLLLLPGSVDS). The Ig-like V-type domain occupies 22–124 (YEVVKGVVGH…WFNDQKMTFS (103 aa)). Residues 22–235 (YEVVKGVVGH…RKPQRNPTKG (214 aa)) are Extracellular-facing. 3 disulfides stabilise this stretch: cysteine 37-cysteine 108, cysteine 49-cysteine 60, and cysteine 55-cysteine 107. Positions 129-177 (PEIPTSPPTRPTTTRPTTTRPTTISTRSTHVPTSTRVSTSTPTPEQTQT) are disordered. Positions 139–175 (PTTTRPTTTRPTTISTRSTHVPTSTRVSTSTPTPEQT) are enriched in low complexity. A glycan (N-linked (GlcNAc...) asparagine) is linked at asparagine 206. Residues 236-256 (FYVGMSVAALLLLLLASTVVV) traverse the membrane as a helical segment. At 257–307 (TRYIIIRKKMGSLSFVAFHVSKSRALQNAAIVHPRAEDNIYIIEDRSRGAE) the chain is on the cytoplasmic side.

This sequence belongs to the immunoglobulin superfamily. TIM family. In terms of assembly, interacts with STAM. Interacts with SELPLG. Expressed at a low level in normal kidney but are increased dramatically in postischemic kidney. Expressed in proliferating bromodeoxyuridine-positive and dedifferentiated vimentin-positive epithelial cells in regenerating proximal tubules.

The protein localises to the cell membrane. In terms of biological role, phosphatidylserine receptor that plays an important functional role in regulatory B-cells homeostasis including generation, expansion and suppressor functions. As P-selectin/SELPLG ligand, plays a specialized role in activated but not naive T-cell trafficking during inflammatory responses. Controls thereby T-cell accumulation in the inflamed central nervous system (CNS) and the induction of autoimmune disease. Also regulates expression of various anti-inflammatory cytokines and co-inhibitory ligands including IL10. Acts as a regulator of T-cell proliferation. May play a role in kidney injury and repair. This is Hepatitis A virus cellular receptor 1 homolog (Havcr1) from Rattus norvegicus (Rat).